The chain runs to 399 residues: S-adenosylmethionine synthase (399 aa).

Residue H15 participates in ATP binding. A Mg(2+)-binding site is contributed by D17. E43 is a binding site for K(+). Residues E56 and Q99 each contribute to the L-methionine site. Positions 99–109 are flexible loop; sequence QSADIAQGVDN. Residues 174 to 176, 244 to 245, D253, 259 to 260, A276, and K280 each bind ATP; these read DGK, RF, and RK. D253 is an L-methionine binding site. K284 is a binding site for L-methionine.

Belongs to the AdoMet synthase family. As to quaternary structure, homotetramer; dimer of dimers. Mg(2+) is required as a cofactor. The cofactor is K(+).

It localises to the cytoplasm. It carries out the reaction L-methionine + ATP + H2O = S-adenosyl-L-methionine + phosphate + diphosphate. Its pathway is amino-acid biosynthesis; S-adenosyl-L-methionine biosynthesis; S-adenosyl-L-methionine from L-methionine: step 1/1. Catalyzes the formation of S-adenosylmethionine (AdoMet) from methionine and ATP. The overall synthetic reaction is composed of two sequential steps, AdoMet formation and the subsequent tripolyphosphate hydrolysis which occurs prior to release of AdoMet from the enzyme. This chain is S-adenosylmethionine synthase, found in Salinispora tropica (strain ATCC BAA-916 / DSM 44818 / JCM 13857 / NBRC 105044 / CNB-440).